A 257-amino-acid chain; its full sequence is MQKVTIQEAEHLLQEIISEEDDRFQILIKDERKGVQKLISKWYKQKELAQKEKEKFLEMSKYENALREKGLTYIAGIDEVGRGPLAGPVVTAAVILPEDFYIPGLNDSKKLSEAKRERFYGEIKAKAIAIGVXIVSPQVIDEINIYQATKQAMLDAIANLSCTPEYLLIDAMKLPTPIPQTSIIKGDAKSISISAASIIAKVTRDRMMKELGEKYPAYGFEQHMGYGTKQHLEAIEAHGVLEEHRKSFAPIKDMIQK.

The 186-residue stretch at 72–257 (TYIAGIDEVG…FAPIKDMIQK (186 aa)) folds into the RNase H type-2 domain. 3 residues coordinate a divalent metal cation: D78, E79, and D170.

This sequence belongs to the RNase HII family. The cofactor is Mn(2+). Mg(2+) is required as a cofactor.

It is found in the cytoplasm. It catalyses the reaction Endonucleolytic cleavage to 5'-phosphomonoester.. Functionally, endonuclease that specifically degrades the RNA of RNA-DNA hybrids. This chain is Ribonuclease HII, found in Bacillus cereus (strain AH820).